The following is a 126-amino-acid chain: Glycine cleavage system H protein (126 aa).

One can recognise a Lipoyl-binding domain in the interval 21–103; that stretch reads TVTVGISNHA…YEGGWIARIK (83 aa). An N6-lipoyllysine modification is found at Lys62.

Belongs to the GcvH family. The glycine cleavage system is composed of four proteins: P, T, L and H. (R)-lipoate serves as cofactor.

In terms of biological role, the glycine cleavage system catalyzes the degradation of glycine. The H protein shuttles the methylamine group of glycine from the P protein to the T protein. This chain is Glycine cleavage system H protein, found in Aliivibrio salmonicida (strain LFI1238) (Vibrio salmonicida (strain LFI1238)).